The primary structure comprises 315 residues: MKTMEIKKLLRKIDEFKIITLPAIFVVFILFVLILGFYFFNALPAIERYGIDLFITNVWKAAEEPAKEVYGLAAPIWGSIYTATIAVLIALPLSICYAIFVNDYAPKRLKYPLIVISDIMAGLPTIIYGIWGAFILVPLLRDHIMKFLYEHFSFIPLFDYPPLSGYCYLSAGILLGIMVTPFAAAIIREAYAMIPSVYKEGLVALGATRYETTKVLIKYIRPAIISGLILAFGRALGETVAVSLVIGNSFNLTYKLFAPGYTISSLIANQFGNAVLYEYMTSVLYSAGLVLFVIGLVVNIIGIYYLKRWREHVSH.

The next 6 helical transmembrane spans lie at 18-38, 80-100, 119-139, 167-187, 227-247, and 283-303; these read IITL…LGFY, IYTA…YAIF, IMAG…LVPL, CYLS…AAII, GLIL…LVIG, and VLYS…IIGI. The region spanning 76-302 is the ABC transmembrane type-1 domain; it reads IWGSIYTATI…VIGLVVNIIG (227 aa).

It belongs to the binding-protein-dependent transport system permease family. CysTW subfamily.

Its subcellular location is the cell membrane. In terms of biological role, part of the binding-protein-dependent transport system for phosphate; probably responsible for the translocation of the substrate across the membrane. This is Probable phosphate transport system permease protein PstC (pstC) from Methanocaldococcus jannaschii (strain ATCC 43067 / DSM 2661 / JAL-1 / JCM 10045 / NBRC 100440) (Methanococcus jannaschii).